We begin with the raw amino-acid sequence, 351 residues long: Silk gland factor 3 (351 aa).

2 disordered regions span residues Ala-61–Arg-88 and Ser-131–Ser-154. Basic and acidic residues predominate over residues Asp-135–Asp-145. Positions Glu-149–Asp-223 constitute a POU-specific domain. The segment at residues Lys-241–Thr-300 is a DNA-binding region (homeobox). Positions Gly-314 to His-351 are disordered.

The protein belongs to the POU transcription factor family. Class-3 subfamily. As to expression, restricted to the middle silk gland.

Its subcellular location is the nucleus. Functionally, involved in the transcriptional regulation of sericin-1 gene. The protein is Silk gland factor 3 (SGF3) of Bombyx mori (Silk moth).